Here is a 345-residue protein sequence, read N- to C-terminus: NADH-ubiquinone oxidoreductase chain 2 (345 aa).

9 consecutive transmembrane segments (helical) span residues 1–21 (MNPIINFILLFSMMAGTILAM), 25–45 (HWVYAWLGLELNTLAIIPIIS), 60–80 (FLIQAISSALFLLSGITNAYL), 113–133 (FWLPEVLQGVPILTALIIATW), 148–168 (LIPTPITLTMGLLSTIIGGLG), 191–211 (VIIITIAPNLTLLNLTLYMIF), 239–259 (IITSLFLLSLLSLGGLPPMSG), 274–294 (HLTPLALSMALMALLSLMFYL), and 324–344 (SSLSMLTPPSLLILPIMPLLI).

This sequence belongs to the complex I subunit 2 family.

It localises to the mitochondrion inner membrane. The catalysed reaction is a ubiquinone + NADH + 5 H(+)(in) = a ubiquinol + NAD(+) + 4 H(+)(out). In terms of biological role, core subunit of the mitochondrial membrane respiratory chain NADH dehydrogenase (Complex I) that is believed to belong to the minimal assembly required for catalysis. Complex I functions in the transfer of electrons from NADH to the respiratory chain. The immediate electron acceptor for the enzyme is believed to be ubiquinone. The protein is NADH-ubiquinone oxidoreductase chain 2 (MT-ND2) of Varanus baritji (Black-spotted ridge-tailed monitor).